The following is a 239-amino-acid chain: Trimethylguanosine synthase (239 aa).

It belongs to the methyltransferase superfamily. Trimethylguanosine synthase family. As to quaternary structure, monomer. Interacts with mug174; both proteins are required to maintain Cajal body integrity.

The protein localises to the nucleus. It is found in the cajal body. It catalyses the reaction a 5'-end (N(7)-methyl 5'-triphosphoguanosine)-ribonucleoside in snRNA + S-adenosyl-L-methionine = a 5'-end (N(2),N(7)-dimethyl 5'-triphosphoguanosine)-ribonucleoside in snRNA + S-adenosyl-L-homocysteine + H(+). The enzyme catalyses a 5'-end (N(7)-methyl 5'-triphosphoguanosine)-ribonucleoside in snoRNA + S-adenosyl-L-methionine = a 5'-end (N(2),N(7)-dimethyl 5'-triphosphoguanosine)-ribonucleoside in snoRNA + S-adenosyl-L-homocysteine + H(+). The catalysed reaction is a 5'-end (N(2),N(7)-dimethyl 5'-triphosphoguanosine)-ribonucleoside in snRNA + S-adenosyl-L-methionine = a 5'-end (N(2),N(2),N(7)-trimethyl 5'-triphosphoguanosine)-ribonucleoside in snRNA + S-adenosyl-L-homocysteine + H(+). It carries out the reaction a 5'-end (N(2),N(7)-dimethyl 5'-triphosphoguanosine)-ribonucleoside in snoRNA + S-adenosyl-L-methionine = a 5'-end (N(2),N(2),N(7)-trimethyl 5'-triphosphoguanosine)-ribonucleoside in snoRNA + S-adenosyl-L-homocysteine + H(+). Its activity is regulated as follows. Substrate inhibited by S-adenosyl-L-homocysteine. In terms of biological role, catalyzes the two serial methylation steps for the conversion of the 7-monomethylguanosine (m(7)G) caps of snRNAs and snoRNAs to a 2,2,7-trimethylguanosine (m(2,2,7)G) cap structure. The enzyme is specific for guanine, and N7 methylation must precede N2 methylation. Required for pre-mRNA splicing, pre-rRNA processing and small ribosomal subunit synthesis. Involved in nucleolar structural organization. This is Trimethylguanosine synthase (tgs1) from Schizosaccharomyces pombe (strain 972 / ATCC 24843) (Fission yeast).